The chain runs to 123 residues: Small ribosomal subunit protein uS12c (123 aa).

The segment at A103–E123 is disordered. Residues K107–E123 are compositionally biased toward basic residues.

It belongs to the universal ribosomal protein uS12 family. Part of the 30S ribosomal subunit.

Its subcellular location is the plastid. The protein resides in the chloroplast. In terms of biological role, with S4 and S5 plays an important role in translational accuracy. Located at the interface of the 30S and 50S subunits. This Guillardia theta (Cryptophyte) protein is Small ribosomal subunit protein uS12c (rps12).